Here is a 323-residue protein sequence, read N- to C-terminus: Penicillopepsin-1 (323 aa).

The O-linked (Man...) serine glycan is linked to S3. T7 is a glycosylation site (O-linked (Man...) threonine). The Peptidase A1 domain maps to 17-320 (YITPVTIGGT…DSDGPQLGFA (304 aa)). Catalysis depends on residues D33 and D213. The cysteines at positions 249 and 283 are disulfide-linked.

Belongs to the peptidase A1 family. Monomer.

The protein localises to the secreted. It carries out the reaction Hydrolysis of proteins with broad specificity similar to that of pepsin A, preferring hydrophobic residues at P1 and P1', but also cleaving 20-Gly-|-Glu-21 in the B chain of insulin. Clots milk, and activates trypsinogen.. Functionally, secreted aspartic endopeptidase that allows assimilation of proteinaceous substrates. The scissile peptide bond is attacked by a nucleophilic water molecule activated by two aspartic residues in the active site. Shows a broad primary substrate specificity. Favors hydrophobic residues at the P1 and P1' positions, but can also activate trypsinogen and hydrolyze the B chain of insulin between positions 'Gly-20' and 'Glu-21'. This is Penicillopepsin-1 from Penicillium janthinellum (Penicillium vitale).